The following is a 397-amino-acid chain: MIRYFTAGESHGPALSAIVEGMPAGITITPKEINTQLARRQQGHGRGGRMKIESDKAEILSGVRFGKTIGSPITLVINNRDWQNWTTTMAQFEKPDEQCSKITIPRPGHADLAGRIKYGFDDIRPVIERSSARETAARVAAGTVARLFLKALGIEIGSYISAIGSAAEASPDKQLEGLLLEGAEAVARQADLSPVRMLGKETETNALAAIDGASERGDTLGGIIEIFITGVPPGFGSYVQHDRRLDAALAAAIISIQAIKGVEIGTAFENARKPGSEVHDEFHLSREKGVIRKTNRAGGLEGSMSSGQTIHLRAAMKPISSLVTPLLSFDVETLQATPSRFERSDTCAVPAAGVVAEAVLAPVIANALLEKLGGDHLDEIRQRLDLYRESIRSTFHS.

2 residues coordinate NADP(+): Arg-40 and Arg-46. FMN-binding positions include 129-131, 257-258, Gly-302, 317-321, and Arg-343; these read RSS, QA, and KPISS.

Belongs to the chorismate synthase family. As to quaternary structure, homotetramer. FMNH2 is required as a cofactor.

It carries out the reaction 5-O-(1-carboxyvinyl)-3-phosphoshikimate = chorismate + phosphate. It functions in the pathway metabolic intermediate biosynthesis; chorismate biosynthesis; chorismate from D-erythrose 4-phosphate and phosphoenolpyruvate: step 7/7. Functionally, catalyzes the anti-1,4-elimination of the C-3 phosphate and the C-6 proR hydrogen from 5-enolpyruvylshikimate-3-phosphate (EPSP) to yield chorismate, which is the branch point compound that serves as the starting substrate for the three terminal pathways of aromatic amino acid biosynthesis. This reaction introduces a second double bond into the aromatic ring system. This is Chorismate synthase from Pelodictyon phaeoclathratiforme (strain DSM 5477 / BU-1).